Here is a 635-residue protein sequence, read N- to C-terminus: Phosphatidylserine decarboxylase proenzyme 3 (635 aa).

The disordered stretch occupies residues 1 to 42 (MGNGNSTETKESRRSKMRKKIQNFRSRRRLSRPGSGSVSGLA). Gly2 carries N-myristoyl glycine lipidation. The segment covering 15 to 31 (SKMRKKIQNFRSRRRLS) has biased composition (basic residues). Positions 22–147 (QNFRSRRRLS…VVQEPDSTCK (126 aa)) constitute a C2 domain. EF-hand domains are found at residues 180–210 (AKRI…FGNV) and 211–246 (VAAN…QQEQ). Ca(2+) is bound by residues Asp188, Asp190, Asp192, Lys194, Glu199, Asp224, Asn226, Asp228, and Glu235. Catalysis depends on charge relay system; for autoendoproteolytic cleavage activity residues Asp442, His498, and Ser586. Ser586 acts as the Schiff-base intermediate with substrate; via pyruvic acid; for decarboxylase activity in catalysis. Pyruvic acid (Ser); by autocatalysis is present on Ser586.

Belongs to the phosphatidylserine decarboxylase family. PSD-B subfamily. Eukaryotic type II sub-subfamily. In terms of assembly, heterodimer of a large membrane-associated beta subunit and a small pyruvoyl-containing alpha subunit. The cofactor is pyruvate. Is synthesized initially as an inactive proenzyme. Formation of the active enzyme involves a self-maturation process in which the active site pyruvoyl group is generated from an internal serine residue via an autocatalytic post-translational modification. Two non-identical subunits are generated from the proenzyme in this reaction, and the pyruvate is formed at the N-terminus of the alpha chain, which is derived from the carboxyl end of the proenzyme. The autoendoproteolytic cleavage occurs by a canonical serine protease mechanism, in which the side chain hydroxyl group of the serine supplies its oxygen atom to form the C-terminus of the beta chain, while the remainder of the serine residue undergoes an oxidative deamination to produce ammonia and the pyruvoyl prosthetic group on the alpha chain. During this reaction, the Ser that is part of the protease active site of the proenzyme becomes the pyruvoyl prosthetic group, which constitutes an essential element of the active site of the mature decarboxylase. Expressed in roots, leaves, stems and flowers.

The protein localises to the endoplasmic reticulum membrane. The catalysed reaction is a 1,2-diacyl-sn-glycero-3-phospho-L-serine + H(+) = a 1,2-diacyl-sn-glycero-3-phosphoethanolamine + CO2. The protein operates within phospholipid metabolism; phosphatidylethanolamine biosynthesis; phosphatidylethanolamine from CDP-diacylglycerol: step 2/2. Catalyzes the formation of phosphatidylethanolamine (PtdEtn) from phosphatidylserine (PtdSer). Plays a central role in phospholipid metabolism and in the interorganelle trafficking of phosphatidylserine. Contributes only to a minor proportion of PtdEtn production. This is Phosphatidylserine decarboxylase proenzyme 3 (PSD3) from Arabidopsis thaliana (Mouse-ear cress).